A 133-amino-acid polypeptide reads, in one-letter code: uncharacterized protein (133 aa).

This is an uncharacterized protein from Rickettsia conorii (strain ATCC VR-613 / Malish 7).